The primary structure comprises 159 residues: Phosphopantetheine adenylyltransferase (159 aa).

Threonine 10 contacts substrate. ATP is bound by residues 10–11 (TF) and histidine 18. Residues lysine 42, methionine 74, and arginine 88 each coordinate substrate. ATP-binding positions include 89-91 (GLR), glutamate 99, and 124-130 (WSFISSS).

Belongs to the bacterial CoaD family. Homohexamer. The cofactor is Mg(2+).

It is found in the cytoplasm. The enzyme catalyses (R)-4'-phosphopantetheine + ATP + H(+) = 3'-dephospho-CoA + diphosphate. The protein operates within cofactor biosynthesis; coenzyme A biosynthesis; CoA from (R)-pantothenate: step 4/5. Functionally, reversibly transfers an adenylyl group from ATP to 4'-phosphopantetheine, yielding dephospho-CoA (dPCoA) and pyrophosphate. The polypeptide is Phosphopantetheine adenylyltransferase (Salmonella dublin (strain CT_02021853)).